A 155-amino-acid chain; its full sequence is Cyanate hydratase (155 aa).

Residues R95, E98, and S121 contribute to the active site.

The protein belongs to the cyanase family.

It catalyses the reaction cyanate + hydrogencarbonate + 3 H(+) = NH4(+) + 2 CO2. In terms of biological role, catalyzes the reaction of cyanate with bicarbonate to produce ammonia and carbon dioxide. The sequence is that of Cyanate hydratase from Pseudomonas syringae pv. syringae (strain B728a).